The primary structure comprises 332 residues: MMQDLRLILIVVGAIAIIALLLHGLWTSRKERSSLFRDRPVKRAKKARDETPLDDLDEGVGEVRVKGARPQQSEPSFDSASVDSSSFDNYGSAREDVRSEAKSPFEHMSPVSAYDPLLDEATPVDSPRSQVRGDANPQVVDPRQAFIPESDIDAPREPFAYDAPSSAQQQPVSHSLHEKVQPAPQQPAEPAAAKETVLVLHVVAHQGGVIGGELLLQSLLQAGFQFGEMNIFHRHVNPAGAGPVLFSLANMVKPGSFNVDTMSEFSTPGVSIFMMVPSYGDAGQNFKLMLQSAQRIADDVGGVVQDDERRMMTPQKVESYKARIRDVLKANA.

Over methionine 1 to arginine 6 the chain is Periplasmic. The chain crosses the membrane as a helical span at residues leucine 7 to threonine 27. At serine 28–alanine 332 the chain is on the cytoplasmic side. Positions proline 40 to threonine 51 are enriched in basic and acidic residues. The segment at proline 40–glutamate 189 is disordered. Residues serine 76–aspartate 88 are compositionally biased toward low complexity. Residues alanine 93 to phenylalanine 105 are compositionally biased toward basic and acidic residues.

Belongs to the ZipA family. Interacts with FtsZ via their C-terminal domains.

It is found in the cell inner membrane. In terms of biological role, essential cell division protein that stabilizes the FtsZ protofilaments by cross-linking them and that serves as a cytoplasmic membrane anchor for the Z ring. Also required for the recruitment to the septal ring of downstream cell division proteins. This is Cell division protein ZipA from Pectobacterium atrosepticum (strain SCRI 1043 / ATCC BAA-672) (Erwinia carotovora subsp. atroseptica).